The sequence spans 289 residues: 33 kDa chaperonin (289 aa).

2 disulfide bridges follow: Cys225–Cys227 and Cys258–Cys261.

Belongs to the HSP33 family. In terms of processing, under oxidizing conditions two disulfide bonds are formed involving the reactive cysteines. Under reducing conditions zinc is bound to the reactive cysteines and the protein is inactive.

The protein resides in the cytoplasm. Functionally, redox regulated molecular chaperone. Protects both thermally unfolding and oxidatively damaged proteins from irreversible aggregation. Plays an important role in the bacterial defense system toward oxidative stress. This Nitrosococcus oceani (strain ATCC 19707 / BCRC 17464 / JCM 30415 / NCIMB 11848 / C-107) protein is 33 kDa chaperonin.